A 578-amino-acid chain; its full sequence is GRAM domain-containing protein 4 (578 aa).

Disordered stretches follow at residues 23–58 and 136–159; these read ESPN…AGPG and TEEQ…ERRS. Residues serine 24 and serine 28 each carry the phosphoserine modification. Basic and acidic residues predominate over residues 44 to 53; it reads SPRDSEELRD. Residues 83–143 adopt a coiled-coil conformation; it reads HLEIALLEKH…ARTEEQMAQQ (61 aa). 3 helical membrane-spanning segments follow: residues 240–260, 334–354, and 356–376; these read VYMN…LAIL, ITQK…FFPY, and LVGL…DFIF. The disordered stretch occupies residues 415 to 435; the sequence is QTTSSRSYVPSAPAGLGKEED. The 79-residue stretch at 445–523 folds into the GRAM domain; the sequence is GNFHEIFNLT…VDITDIQKYK (79 aa).

As to quaternary structure, interacts with RTN4 (isoform B). In terms of tissue distribution, expressed in lung and in primary lung squamous cell carcinoma (LSCC).

Its subcellular location is the mitochondrion membrane. It localises to the endoplasmic reticulum membrane. Plays a role as a mediator of E2F1-induced apoptosis in the absence of p53/TP53. Plays a role as a mediator of E2F1-induced apoptosis in the absence of p53/TP53. Inhibits TLR9 response to nucelic acids and regulates TLR9-mediated innate immune response. The polypeptide is GRAM domain-containing protein 4 (Homo sapiens (Human)).